Reading from the N-terminus, the 327-residue chain is MTTLAQYLNTKATTPALNDVITTVTDVGKTISQLLRKGALADILGEAGNQNVQGEDQKKLDVLANDLLLDALAQNSHCAGVASEELDDATPANVDGSLLVLFDPLDGSSNIDINMAVGTIFSILPYQRQGQVSENSDFLQAGNQQLAAGYLLYGTSTVLTLTITDNVVMFSLDPDTNDYVLIEENVTIDADTSEYAINASNYRYWRAPMQQYIDELIAGETGVRGRDFNTRWVAAMVGDVHRILCRGGLFTYPFDTKYANKAGKLRLMYEANPMSLLIERASGGATDAVNRILDIEPIDIHQRVPVVLGSKNEVDYIKELHLNHTDK.

Mg(2+) is bound by residues Glu84, Asp103, Leu105, and Asp106. Substrate contacts are provided by residues 106-109 (DGSS), Asn198, and Lys264. Glu270 contributes to the Mg(2+) binding site.

Belongs to the FBPase class 1 family. As to quaternary structure, homotetramer. The cofactor is Mg(2+).

The protein localises to the cytoplasm. It carries out the reaction beta-D-fructose 1,6-bisphosphate + H2O = beta-D-fructose 6-phosphate + phosphate. The protein operates within carbohydrate biosynthesis; gluconeogenesis. In Psychrobacter cryohalolentis (strain ATCC BAA-1226 / DSM 17306 / VKM B-2378 / K5), this protein is Fructose-1,6-bisphosphatase class 1.